Here is a 564-residue protein sequence, read N- to C-terminus: Copine-8 (564 aa).

2 consecutive C2 domains span residues 1 to 133 (MDSR…RLEK) and 142 to 265 (KCGT…FNVY). The Ca(2+) site is built by D39, D45, D99, D101, S104, K109, D111, D173, D179, D235, D237, and D243. At S260 the chain carries Phosphoserine. Residues 309–510 (NFTVAIDFTA…VQFVPFRDYI (202 aa)) enclose the VWFA domain.

Belongs to the copine family. Requires Ca(2+) as cofactor.

In terms of biological role, probable calcium-dependent phospholipid-binding protein that may play a role in calcium-mediated intracellular processes. This is Copine-8 from Homo sapiens (Human).